A 362-amino-acid polypeptide reads, in one-letter code: Peptide chain release factor 1 (362 aa).

Gln232 is modified (N5-methylglutamine).

It belongs to the prokaryotic/mitochondrial release factor family. In terms of processing, methylated by PrmC. Methylation increases the termination efficiency of RF1.

It is found in the cytoplasm. Peptide chain release factor 1 directs the termination of translation in response to the peptide chain termination codons UAG and UAA. This Myxococcus xanthus protein is Peptide chain release factor 1.